Here is a 386-residue protein sequence, read N- to C-terminus: O-phospho-L-seryl-tRNA:Cys-tRNA synthase (386 aa).

Residues 89-90, N196, and 219-221 each bind pyridoxal 5'-phosphate; these read AR and SGH. Residue K222 is modified to N6-(pyridoxal phosphate)lysine.

This sequence belongs to the SepCysS family. In terms of assembly, homodimer. Interacts with SepRS. Pyridoxal 5'-phosphate is required as a cofactor.

The enzyme catalyses O-phospho-L-seryl-tRNA(Cys) + hydrogen sulfide + H(+) = L-cysteinyl-tRNA(Cys) + phosphate. Converts O-phospho-L-seryl-tRNA(Cys) (Sep-tRNA(Cys)) to L-cysteinyl-tRNA(Cys) (Cys-tRNA(Cys)). The polypeptide is O-phospho-L-seryl-tRNA:Cys-tRNA synthase (Methanosarcina mazei (strain ATCC BAA-159 / DSM 3647 / Goe1 / Go1 / JCM 11833 / OCM 88) (Methanosarcina frisia)).